The primary structure comprises 428 residues: Spliceosome RNA helicase DDX39B (428 aa).

Acidic residues predominate over residues Met1 to Glu19. Residues Met1–Val35 are disordered. Positions Ser45–His73 match the Q motif motif. A Helicase ATP-binding domain is found at Ile76–Ile249. Residue Ala89 to Thr96 participates in ATP binding. The short motif at Asp196–Asp199 is the DECD box element. The Helicase C-terminal domain maps to Gly261–Ser422.

This sequence belongs to the DEAD box helicase family. DECD subfamily. Component of the transcription/export (TREX) complex at least composed of ALYREF/THOC4, DDX39B, SARNP/CIP29, CHTOP and the THO subcomplex.

Its subcellular location is the nucleus. The protein localises to the nucleus speckle. The enzyme catalyses ATP + H2O = ADP + phosphate + H(+). Involved in nuclear export of spliced and unspliced mRNA. Component of the TREX complex which is thought to couple mRNA transcription, processing and nuclear export, and specifically associates with spliced mRNA and not with unspliced pre-mRNA. The TREX complex is recruited to spliced mRNAs by a transcription-independent mechanism, binds to mRNA upstream of the exon-junction complex (EJC) and is recruited in a splicing- and cap-dependent manner to a region near the 5' end of the mRNA where it functions in mRNA export to the cytoplasm via the TAP/NXF1 pathway. Involved in transcription elongation and genome stability. Its function is as follows. Splice factor that is required for the first ATP-dependent step in spliceosome assembly and for the interaction of U2 snRNP with the branchpoint. Has both RNA-stimulated ATP binding/hydrolysis activity and ATP-dependent RNA unwinding activity. Even with the stimulation of RNA, the ATPase activity is weak. Can only hydrolyze ATP but not other NTPs. The RNA stimulation of ATPase activity does not have a strong preference for the sequence and length of the RNA. However, ssRNA stimulates the ATPase activity much more strongly than dsRNA. Can unwind 5' or 3' overhangs or blunt end RNA duplexes in vitro. The ATPase and helicase activities are not influenced by U2AF2; the effect of ALYREF/THOC4 is reported conflictingly. This is Spliceosome RNA helicase DDX39B (DDX39B) from Gallus gallus (Chicken).